The sequence spans 35 residues: Kappa-theraphotoxin-Gr1b (35 aa).

Cystine bridges form between cysteine 2–cysteine 16, cysteine 9–cysteine 21, and cysteine 15–cysteine 28. The tract at residues 4–6 (YLF) is involved in active face.

The protein belongs to the neurotoxin 10 (Hwtx-1) family. 09 (HaTx) subfamily. Expressed by the venom gland.

The protein localises to the secreted. Functionally, inhibitor of voltage-gated potassium channels. Inhibits Kv2.1/KCNB1 channels, by shifting activation of the channel to more depolarized voltages. The toxin binding sites may be situated on the S3-S4 extracellular linker of the channel. One, two, three or four toxin molecules may bind the Kv2.1/KCNB1 channel. May need to partition into the membrane in order to bind to the channel. Antibacterial activity is not observed. This chain is Kappa-theraphotoxin-Gr1b, found in Grammostola rosea (Chilean rose tarantula).